A 433-amino-acid chain; its full sequence is Protein slt1 (433 aa).

Disordered regions lie at residues 159 to 184 (SPEE…SEYA), 200 to 234 (NAPE…EELS), and 252 to 433 (SNKR…DEDA). Polar residues-rich tracts occupy residues 172–184 (DQQT…SEYA) and 215–228 (TLPN…QASV). Residues Ser-227, Ser-229, and Ser-269 each carry the phosphoserine modification. A compositionally biased stretch (basic and acidic residues) spans 343–353 (IDTKAGEKLTD). The segment covering 385–421 (EGSNNHEQGSFNEPKSNVDSNDSASPKRPSSQASLRH) has biased composition (polar residues). Ser-409, Ser-415, and Ser-418 each carry phosphoserine.

This chain is Protein slt1 (slt1), found in Schizosaccharomyces pombe (strain 972 / ATCC 24843) (Fission yeast).